A 77-amino-acid polypeptide reads, in one-letter code: Delta/omega-plectoxin-Pt1a (77 aa).

The N-terminal stretch at 1 to 20 (MKHLIVAVVLLSALAICTSA) is a signal peptide. Positions 21-34 (EEEQVNVPFRPEER) are excised as a propeptide. 5 disulfides stabilise this stretch: cysteine 38-cysteine 51, cysteine 45-cysteine 57, cysteine 50-cysteine 67, cysteine 54-cysteine 74, and cysteine 59-cysteine 65. The O-palmitoyl serine moiety is linked to residue serine 73. Cysteine 74 is subject to Cysteine amide.

This sequence belongs to the neurotoxin 02 (plectoxin) family. 01 (Tx3) subfamily. Expressed by the venom gland.

It is found in the secreted. Functionally, excitatory toxin that acts on both calcium and sodium (Nav) channels. It preferentially blocks a subset of calcium channels that is apparently not required for neurotransmitter release, it decreases threshold for sodium channel activation and it slows sodium channel inactivation. As it enhances synaptic transmission by prolonging presynaptic release of neurotransmitter, its effects on sodium and calcium channels may act synergistically to sustain the terminal excitability. The protein is Delta/omega-plectoxin-Pt1a of Plectreurys tristis (Spider).